Reading from the N-terminus, the 226-residue chain is ATP-dependent Clp protease proteolytic subunit 2 (226 aa).

Catalysis depends on S118, which acts as the Nucleophile. H143 is an active-site residue.

Belongs to the peptidase S14 family. As to quaternary structure, fourteen ClpP subunits assemble into 2 heptameric rings which stack back to back to give a disk-like structure with a central cavity, resembling the structure of eukaryotic proteasomes.

The protein localises to the cytoplasm. The catalysed reaction is Hydrolysis of proteins to small peptides in the presence of ATP and magnesium. alpha-casein is the usual test substrate. In the absence of ATP, only oligopeptides shorter than five residues are hydrolyzed (such as succinyl-Leu-Tyr-|-NHMec, and Leu-Tyr-Leu-|-Tyr-Trp, in which cleavage of the -Tyr-|-Leu- and -Tyr-|-Trp bonds also occurs).. Cleaves peptides in various proteins in a process that requires ATP hydrolysis. Has a chymotrypsin-like activity. Plays a major role in the degradation of misfolded proteins. The protein is ATP-dependent Clp protease proteolytic subunit 2 of Synechocystis sp. (strain ATCC 27184 / PCC 6803 / Kazusa).